Consider the following 180-residue polypeptide: Inner membrane-spanning protein YciB (180 aa).

A run of 5 helical transmembrane segments spans residues 10–30 (IIAF…GVLM), 47–67 (ITTR…VTLL), 74–94 (IKMK…GGLI), 121–141 (YAWI…AEFW), and 151–171 (VFGI…YMYH).

The protein belongs to the YciB family.

It localises to the cell inner membrane. In terms of biological role, plays a role in cell envelope biogenesis, maintenance of cell envelope integrity and membrane homeostasis. The polypeptide is Inner membrane-spanning protein YciB (Idiomarina loihiensis (strain ATCC BAA-735 / DSM 15497 / L2-TR)).